We begin with the raw amino-acid sequence, 299 residues long: Sulfate adenylyltransferase subunit 2 (299 aa).

Belongs to the PAPS reductase family. CysD subfamily. As to quaternary structure, sulfate-activating enzymes, NodP and NodQ, may be physically associated.

It carries out the reaction sulfate + ATP + H(+) = adenosine 5'-phosphosulfate + diphosphate. Proposed to provide activated sulfate for transfer to nod factor. This is Sulfate adenylyltransferase subunit 2 (nodP) from Rhizobium sp. (strain BR816).